Here is a 493-residue protein sequence, read N- to C-terminus: Zinc finger CCCH domain-containing protein 34 (493 aa).

3 consecutive C3H1-type zinc fingers follow at residues 14 to 43 (RRCNTDCVYFLASPFTCTKGSKCEYRHADG), 45 to 71 (RFNRRNCWYWFKGNCVNPSCTFRHPPL), and 91 to 118 (VKAANPCYFYYNSHCSKGDNCPYLHEPL). Residues 397-477 (MGECPQPANH…SFSDDFEGPK (81 aa)) are disordered. The segment covering 409 to 420 (FRGRRKKNRGKQ) has biased composition (basic residues). Residues 452-468 (SNSSFSHSTACTPNVRS) are compositionally biased toward polar residues.

This chain is Zinc finger CCCH domain-containing protein 34, found in Oryza sativa subsp. japonica (Rice).